The sequence spans 236 residues: Protein-S-isoprenylcysteine O-methyltransferase (236 aa).

A run of 4 helical transmembrane segments spans residues 3–23 (NLHT…LGCV), 24–44 (FGLG…FFAF), 76–96 (AYWL…GKSF), and 108–128 (FLIN…LCLG). S-adenosyl-L-methionine is bound by residues 155–158 (HLLV), Tyr163, and 168–171 (HPSY). The helical transmembrane segment at 174–194 (FFIWALGTQMLLGNFVSTLLF) threads the bilayer. Arg205 contributes to the substrate binding site. Position 209 (Glu209) interacts with S-adenosyl-L-methionine.

The protein belongs to the class VI-like SAM-binding methyltransferase superfamily. Isoprenylcysteine carboxyl methyltransferase family.

It is found in the membrane. It catalyses the reaction [protein]-C-terminal S-[(2E,6E)-farnesyl]-L-cysteine + S-adenosyl-L-methionine = [protein]-C-terminal S-[(2E,6E)-farnesyl]-L-cysteine methyl ester + S-adenosyl-L-homocysteine. Mediates C-terminal methylation of the isoprenylated C-terminal cysteine in M-factor. This chain is Protein-S-isoprenylcysteine O-methyltransferase (mam4), found in Schizosaccharomyces pombe (strain 972 / ATCC 24843) (Fission yeast).